A 219-amino-acid polypeptide reads, in one-letter code: Ribosome maturation factor RimP (219 aa).

The disordered stretch occupies residues 195–219 (EGRIPGDDLGAEPEDVASTETQEKK).

The protein belongs to the RimP family.

It localises to the cytoplasm. Required for maturation of 30S ribosomal subunits. This is Ribosome maturation factor RimP from Brucella abortus (strain S19).